Reading from the N-terminus, the 172-residue chain is Cytochrome b6-f complex iron-sulfur subunit (172 aa).

A helical transmembrane segment spans residues 17-39 (VFLNALLSSSVGVVVVGTLYPVV). One can recognise a Rieske domain in the interval 61–161 (GKPISVSELL…ATVDGDNVRF (101 aa)). [2Fe-2S] cluster contacts are provided by Cys-107, His-109, Cys-125, and His-128. Cys-112 and Cys-127 form a disulfide bridge.

It belongs to the Rieske iron-sulfur protein family. The 4 large subunits of the cytochrome b6-f complex are cytochrome b6, subunit IV (17 kDa polypeptide, PetD), cytochrome f and the Rieske protein, while the 4 small subunits are PetG, PetL, PetM and PetN. The complex functions as a dimer. The cofactor is [2Fe-2S] cluster.

It is found in the cellular thylakoid membrane. The catalysed reaction is 2 oxidized [plastocyanin] + a plastoquinol + 2 H(+)(in) = 2 reduced [plastocyanin] + a plastoquinone + 4 H(+)(out). In terms of biological role, component of the cytochrome b6-f complex, which mediates electron transfer between photosystem II (PSII) and photosystem I (PSI), cyclic electron flow around PSI, and state transitions. The sequence is that of Cytochrome b6-f complex iron-sulfur subunit from Synechococcus sp. (strain JA-3-3Ab) (Cyanobacteria bacterium Yellowstone A-Prime).